Consider the following 613-residue polypeptide: Leucine aminopeptidase 2 (613 aa).

Residues 134–136 (QAQ) and 265–270 (PYGGME) each bind a peptide. Residue histidine 294 participates in Zn(2+) binding. Glutamate 295 acts as the Proton acceptor in catalysis. Residues histidine 298 and glutamate 317 each contribute to the Zn(2+) site. Tyrosine 382 acts as the Proton donor in catalysis.

Belongs to the peptidase M1 family. Zn(2+) serves as cofactor.

The protein resides in the cytoplasm. It is found in the nucleus. It carries out the reaction an epoxide + H2O = an ethanediol. Its function is as follows. Aminopeptidase that preferentially cleaves di- and tripeptides. Also has low epoxide hydrolase activity (in vitro). Can hydrolyze the epoxide leukotriene LTA(4) but it forms preferentially 5,6-dihydroxy-7,9,11,14-eicosatetraenoic acid rather than the cytokine leukotriene B(4) as the product compared to the homologous mammalian enzyme (in vitro). This Pyricularia oryzae (strain 70-15 / ATCC MYA-4617 / FGSC 8958) (Rice blast fungus) protein is Leucine aminopeptidase 2.